The sequence spans 115 residues: NADH-ubiquinone oxidoreductase chain 3 (115 aa).

The next 3 membrane-spanning stretches (helical) occupy residues 4–24 (IMAMLANISISSCLIIIAFWL), 55–75 (FFLVGITFLLFDLEIALLLPL), and 84–104 (MFLTTLTSFILVSVLALGLAY).

The protein belongs to the complex I subunit 3 family. Core subunit of respiratory chain NADH dehydrogenase (Complex I) which is composed of 45 different subunits. Interacts with TMEM186. Interacts with TMEM242.

The protein localises to the mitochondrion inner membrane. The catalysed reaction is a ubiquinone + NADH + 5 H(+)(in) = a ubiquinol + NAD(+) + 4 H(+)(out). Core subunit of the mitochondrial membrane respiratory chain NADH dehydrogenase (Complex I) which catalyzes electron transfer from NADH through the respiratory chain, using ubiquinone as an electron acceptor. Essential for the catalytic activity of complex I. This Phyllotis darwinii (Darwin's leaf-eared mouse) protein is NADH-ubiquinone oxidoreductase chain 3.